We begin with the raw amino-acid sequence, 175 residues long: NAD(P)H-quinone oxidoreductase subunit J (175 aa).

This sequence belongs to the complex I 30 kDa subunit family. In terms of assembly, NDH-1 can be composed of about 15 different subunits; different subcomplexes with different compositions have been identified which probably have different functions.

It localises to the cellular thylakoid membrane. It carries out the reaction a plastoquinone + NADH + (n+1) H(+)(in) = a plastoquinol + NAD(+) + n H(+)(out). It catalyses the reaction a plastoquinone + NADPH + (n+1) H(+)(in) = a plastoquinol + NADP(+) + n H(+)(out). Functionally, NDH-1 shuttles electrons from an unknown electron donor, via FMN and iron-sulfur (Fe-S) centers, to quinones in the respiratory and/or the photosynthetic chain. The immediate electron acceptor for the enzyme in this species is believed to be plastoquinone. Couples the redox reaction to proton translocation, and thus conserves the redox energy in a proton gradient. Cyanobacterial NDH-1 also plays a role in inorganic carbon-concentration. This is NAD(P)H-quinone oxidoreductase subunit J from Nostoc sp. (strain PCC 7120 / SAG 25.82 / UTEX 2576).